The sequence spans 445 residues: Retrovirus-related Pol polyprotein from type-1 retrotransposable element R2 (445 aa).

The region spanning 1–114 is the Reverse transcriptase domain; the sequence is QPSVFNLVKW…LSRDDSLAKA (114 aa). A nucleic acid-binding endonuclease region spans residues 115 to 445; the sequence is MLASAGPAAE…GATPRQLIEY (331 aa). The span at 380–389 shows a compositional bias: basic residues; it reads GPRPAHHHQP. A disordered region spans residues 380 to 445; sequence GPRPAHHHQP…GATPRQLIEY (66 aa). Polar residues predominate over residues 396–405; it reads ATANTGTLQS.

The enzyme catalyses DNA(n) + a 2'-deoxyribonucleoside 5'-triphosphate = DNA(n+1) + diphosphate. The protein is Retrovirus-related Pol polyprotein from type-1 retrotransposable element R2 of Popillia japonica (Japanese beetle).